A 265-amino-acid chain; its full sequence is Proteasome subunit alpha (265 aa).

The disordered stretch occupies residues 236 to 265 (EKDSKGSKGAQNPKGARDSKNSKSYGESTD).

It belongs to the peptidase T1A family. The 20S proteasome core is composed of 14 alpha and 14 beta subunits that assemble into four stacked heptameric rings, resulting in a barrel-shaped structure. The two inner rings, each composed of seven catalytic beta subunits, are sandwiched by two outer rings, each composed of seven alpha subunits. The catalytic chamber with the active sites is on the inside of the barrel. Has a gated structure, the ends of the cylinder being occluded by the N-termini of the alpha-subunits. Is capped by the proteasome-associated ATPase, ARC.

It is found in the cytoplasm. It functions in the pathway protein degradation; proteasomal Pup-dependent pathway. With respect to regulation, the formation of the proteasomal ATPase ARC-20S proteasome complex, likely via the docking of the C-termini of ARC into the intersubunit pockets in the alpha-rings, may trigger opening of the gate for substrate entry. Interconversion between the open-gate and close-gate conformations leads to a dynamic regulation of the 20S proteasome proteolysis activity. Component of the proteasome core, a large protease complex with broad specificity involved in protein degradation. The protein is Proteasome subunit alpha of Mycobacterium leprae (strain Br4923).